The primary structure comprises 290 residues: NAD kinase (290 aa).

Aspartate 72 (proton acceptor) is an active-site residue. NAD(+) is bound by residues 72-73 (DG), 146-147 (NE), arginine 174, aspartate 176, and 187-192 (TAYALS).

This sequence belongs to the NAD kinase family. A divalent metal cation serves as cofactor.

Its subcellular location is the cytoplasm. It catalyses the reaction NAD(+) + ATP = ADP + NADP(+) + H(+). Involved in the regulation of the intracellular balance of NAD and NADP, and is a key enzyme in the biosynthesis of NADP. Catalyzes specifically the phosphorylation on 2'-hydroxyl of the adenosine moiety of NAD to yield NADP. The chain is NAD kinase from Methylococcus capsulatus (strain ATCC 33009 / NCIMB 11132 / Bath).